Reading from the N-terminus, the 661-residue chain is MPAFPTLDLDGKLGKMDRVVLGWTAVFWLTAMVEGLQVTVPDKKKVAMLFQPTVLRCHFSTSSHQPAVVQWKFKSYCQDRMGESLGMSSPRAQALSKRNLEWDPYLDCLDSRRTVRVVASKQGSTVTLGDFYRGREITIVHDADLQIGKLMWGDSGLYYCIITTPDDLEGKNEDSVELLVLGRTGLLADLLPSFAVEIMPEWVFVGLVILGIFLFFVLVGICWCQCCPHSCCCYVRCPCCPDSCCCPQALYEAGKAAKAGYPPSVSGVPGPYSIPSVPLGGAPSSGMLMDKPHPPPLAPSDSTGGSHSVRKGYRIQADKERDSMKVLYYVEKELAQFDPARRMRGRYNNTISELSSLHDDDSNFRQSYHQMRNKQFPMSGDLESNPDYWSGVMGGNSGTNRGPALEYNKEDRESFRHSQQRSKSEMLSRKNFATGVPAVSMDELAAFADSYGQRSRRANGNSHEARAGSRFERSESRAHGAFYQDGSLDEYYGRGRSREPPGDGERGWTYSPAPARRRPPEDAPLPRLVSRTPGTAPKYDHSYLSSVLERQARPESSSRGGSLETPSKLGAQLGPRSASYYAWSPPTTYKAGASEGEDEDDAADEDALPPYSELELSRGELSRGPSYRGRDLSFHSNSEKRRKKEPAKKPGDFPTRMSLVV.

An N-terminal signal peptide occupies residues 1-35 (MPAFPTLDLDGKLGKMDRVVLGWTAVFWLTAMVEG). Residues 36–177 (LQVTVPDKKK…LEGKNEDSVE (142 aa)) enclose the Ig-like V-type domain. Residues 36–201 (LQVTVPDKKK…PSFAVEIMPE (166 aa)) are Lumenal-facing. A disulfide bridge links Cys-57 with Cys-160. Residues 202-222 (WVFVGLVILGIFLFFVLVGIC) traverse the membrane as a helical segment. Residues 223-661 (WCQCCPHSCC…DFPTRMSLVV (439 aa)) are Cytoplasmic-facing. Disordered stretches follow at residues 288-310 (LMDK…HSVR), 410-429 (EDRE…MLSR), and 453-661 (QRSR…SLVV). 2 stretches are compositionally biased toward basic and acidic residues: residues 410 to 428 (EDRE…EMLS) and 463 to 478 (HEAR…ESRA). Ser-487 is subject to Phosphoserine. A compositionally biased stretch (basic and acidic residues) spans 491 to 506 (YYGRGRSREPPGDGER). Arg-559 bears the Omega-N-methylarginine mark. Ser-594 carries the post-translational modification Phosphoserine. Acidic residues predominate over residues 595–607 (EGEDEDDAADEDA). The segment covering 628–639 (RGRDLSFHSNSE) has biased composition (basic and acidic residues).

This sequence belongs to the immunoglobulin superfamily. LISCH7 family. As to quaternary structure, interacts with MARVELD2 and OCLN. Interacts with P4HB and HSPA5; the interaction with HSPA5 stabilizes ILDR2 expression. Interacts (via C-terminus) with TRA2A, TRA2B and SRSF1. Expressed in epithelial tissues, mainly in liver, kidney and colon.

It is found in the endoplasmic reticulum membrane. The protein localises to the cell junction. It localises to the tight junction. The protein resides in the nucleus. In terms of biological role, may be involved in ER stress pathways with effects on lipid homeostasis and insulin secretion. With ILDR1 and LSR, involved in the maintain of the epithelial barrier function through the recruitment of MARVELD2/tricellulin to tricellular tight junctions. Also functions as a B7-like protein family member expressed on immune cells and inflamed tissue and with T-cell inhibitory activity. In the inner ear, may regulate alternative pre-mRNA splicing via binding to TRA2A, TRA2B and SRSF1. In Mus musculus (Mouse), this protein is Immunoglobulin-like domain-containing receptor 2.